A 552-amino-acid polypeptide reads, in one-letter code: Non-structural protein NS1 (552 aa).

It belongs to the orbivirus non-structural protein NS1 family.

The chain is Non-structural protein NS1 (Segment-5) from Bluetongue virus 1 (isolate Australia) (BTV 1).